The primary structure comprises 261 residues: Cytochrome c oxidase subunit 3 (261 aa).

Topologically, residues 1–15 are mitochondrial matrix; the sequence is MTHQSHAYHMVKPSP. The helical transmembrane segment at 16 to 34 threads the bilayer; that stretch reads WPLTGALSALLMTSGLAMW. The Mitochondrial intermembrane segment spans residues 35–40; it reads FHFHSM. The chain crosses the membrane as a helical span at residues 41–66; that stretch reads TLLMLGLLTNTLTMYQWWRDVTREST. The Mitochondrial matrix portion of the chain corresponds to 67-72; it reads YQGHHT. The helical transmembrane segment at 73-105 threads the bilayer; it reads PPVQKGLRYGMILFITSEVFFFAGFFWAFYHSS. Over 106 to 128 the chain is Mitochondrial intermembrane; sequence LAPTPQLGGHWPPTGITPLNPLE. The chain crosses the membrane as a helical span at residues 129 to 152; it reads VPLLNTSVLLASGVSITWAHHSLM. The Mitochondrial matrix portion of the chain corresponds to 153–155; sequence ENN. Residues 156 to 183 traverse the membrane as a helical segment; sequence RNQMIQALLITILLGLYFTLLQASEYFE. Over 184–190 the chain is Mitochondrial intermembrane; that stretch reads SPFTISD. A helical membrane pass occupies residues 191–223; the sequence is GIYGSTFFVATGFHGLHVIIGSTFLTICFIRQL. Over 224-232 the chain is Mitochondrial matrix; the sequence is MFHFTSKHH. The helical transmembrane segment at 233-256 threads the bilayer; it reads FGFEAAAWYWHFVDVVWLFLYVSI. Residues 257–261 lie on the Mitochondrial intermembrane side of the membrane; that stretch reads YWWGS.

Belongs to the cytochrome c oxidase subunit 3 family. In terms of assembly, component of the cytochrome c oxidase (complex IV, CIV), a multisubunit enzyme composed of 14 subunits. The complex is composed of a catalytic core of 3 subunits MT-CO1, MT-CO2 and MT-CO3, encoded in the mitochondrial DNA, and 11 supernumerary subunits COX4I1 (or COX4I2), COX5A, COX5B, COX6A1 (or COX6A2), COX6B1 (or COX6B2), COX6C, COX7A2 (or COX7A1), COX7B, COX7C, COX8A and NDUFA4, which are encoded in the nuclear genome. The complex exists as a monomer or a dimer and forms supercomplexes (SCs) in the inner mitochondrial membrane with NADH-ubiquinone oxidoreductase (complex I, CI) and ubiquinol-cytochrome c oxidoreductase (cytochrome b-c1 complex, complex III, CIII), resulting in different assemblies (supercomplex SCI(1)III(2)IV(1) and megacomplex MCI(2)III(2)IV(2)).

The protein resides in the mitochondrion inner membrane. It carries out the reaction 4 Fe(II)-[cytochrome c] + O2 + 8 H(+)(in) = 4 Fe(III)-[cytochrome c] + 2 H2O + 4 H(+)(out). Component of the cytochrome c oxidase, the last enzyme in the mitochondrial electron transport chain which drives oxidative phosphorylation. The respiratory chain contains 3 multisubunit complexes succinate dehydrogenase (complex II, CII), ubiquinol-cytochrome c oxidoreductase (cytochrome b-c1 complex, complex III, CIII) and cytochrome c oxidase (complex IV, CIV), that cooperate to transfer electrons derived from NADH and succinate to molecular oxygen, creating an electrochemical gradient over the inner membrane that drives transmembrane transport and the ATP synthase. Cytochrome c oxidase is the component of the respiratory chain that catalyzes the reduction of oxygen to water. Electrons originating from reduced cytochrome c in the intermembrane space (IMS) are transferred via the dinuclear copper A center (CU(A)) of subunit 2 and heme A of subunit 1 to the active site in subunit 1, a binuclear center (BNC) formed by heme A3 and copper B (CU(B)). The BNC reduces molecular oxygen to 2 water molecules using 4 electrons from cytochrome c in the IMS and 4 protons from the mitochondrial matrix. This Homo sapiens (Human) protein is Cytochrome c oxidase subunit 3 (MT-CO3).